The primary structure comprises 156 residues: Small ribosomal subunit protein uS7 (156 aa).

This sequence belongs to the universal ribosomal protein uS7 family. In terms of assembly, part of the 30S ribosomal subunit. Contacts proteins S9 and S11.

In terms of biological role, one of the primary rRNA binding proteins, it binds directly to 16S rRNA where it nucleates assembly of the head domain of the 30S subunit. Is located at the subunit interface close to the decoding center, probably blocks exit of the E-site tRNA. The polypeptide is Small ribosomal subunit protein uS7 (Actinobacillus succinogenes (strain ATCC 55618 / DSM 22257 / CCUG 43843 / 130Z)).